Reading from the N-terminus, the 510-residue chain is Nectin-4 (510 aa).

A signal peptide spans 1-31 (MPLSLGAEMWGPEAWLLLLLLLASFTGRCPA). An Ig-like V-type domain is found at 32–144 (GELETSDVVT…GSFQARLRLR (113 aa)). Over 32–349 (GELETSDVVT…GKQVDLVSAS (318 aa)) the chain is Extracellular. Cystine bridges form between Cys52-Cys127, Cys171-Cys223, and Cys270-Cys315. Ig-like C2-type domains lie at 148-237 (PPLP…QRIT) and 248-331 (ASVR…VTVD). Asn281 carries N-linked (GlcNAc...) asparagine glycosylation. The helical transmembrane segment at 350–370 (VVVVGVIAALLFCLLVVVVVL) threads the bilayer. Over 371 to 510 (MSRYHRRKAQ…IYINGRGHLV (140 aa)) the chain is Cytoplasmic. Residues 399-412 (RRLHSHHTDPRSQP) show a composition bias toward basic and acidic residues. Disordered regions lie at residues 399 to 447 (RRLH…SYST) and 457 to 476 (QTEL…DQDE).

Belongs to the nectin family. In terms of assembly, self-associates. Interacts via its Ig-like V-type domain with NECTIN1 Ig-like V-type domain. Interacts via its C-terminus with AFDN. As to quaternary structure, (Microbial infection) Interacts (via N-terminus) with measles virus hemagglutinin protein. In terms of processing, the soluble form is produced by proteolytic cleavage at the cell surface (shedding), probably by ADAM17/TACE. In terms of tissue distribution, predominantly expressed in placenta. Not detected in normal breast epithelium but expressed in breast carcinoma.

It is found in the cell membrane. It localises to the cell junction. Its subcellular location is the adherens junction. The protein localises to the secreted. Functionally, seems to be involved in cell adhesion through trans-homophilic and -heterophilic interactions, the latter including specifically interactions with NECTIN1. Does not act as receptor for alpha-herpesvirus entry into cells. Its function is as follows. (Microbial infection) Acts as a receptor for measles virus. This Homo sapiens (Human) protein is Nectin-4.